We begin with the raw amino-acid sequence, 98 residues long: Cystatin-A (98 aa).

Met-1 is modified (N-acetylmethionine). The Secondary area of contact signature appears at 46-50; that stretch reads QVVAG.

This sequence belongs to the cystatin family. Expressed in the skin throughout the epidermis.

It is found in the cytoplasm. Its function is as follows. This is an intracellular thiol proteinase inhibitor. Has an important role in desmosome-mediated cell-cell adhesion in the lower levels of the epidermis. This Homo sapiens (Human) protein is Cystatin-A (CSTA).